The following is a 77-amino-acid chain: Large ribosomal subunit protein bL28 (77 aa).

This sequence belongs to the bacterial ribosomal protein bL28 family.

This is Large ribosomal subunit protein bL28 from Leptothrix cholodnii (strain ATCC 51168 / LMG 8142 / SP-6) (Leptothrix discophora (strain SP-6)).